We begin with the raw amino-acid sequence, 185 residues long: MAKQVIQQAKEKMDKAVQAFSRELATVRAGRANAGLLEKVTVDYYGVATPINQLATISVPEARMLVIQPYDKSVIKEMEKAILASDLGVTPSNDGSVIRLVIPPLTEERRRELAKLVKKYSEEAKVAVRNIRRDANDELKKLEKNSEITEDELRSYTDEVQKLTDSHIAKIDAITKEKEKEVMEV.

It belongs to the RRF family.

It localises to the cytoplasm. Functionally, responsible for the release of ribosomes from messenger RNA at the termination of protein biosynthesis. May increase the efficiency of translation by recycling ribosomes from one round of translation to another. This Geobacillus thermodenitrificans (strain NG80-2) protein is Ribosome-recycling factor.